The sequence spans 206 residues: Large ribosomal subunit protein uL4 (206 aa).

The protein belongs to the universal ribosomal protein uL4 family. In terms of assembly, part of the 50S ribosomal subunit.

Its function is as follows. One of the primary rRNA binding proteins, this protein initially binds near the 5'-end of the 23S rRNA. It is important during the early stages of 50S assembly. It makes multiple contacts with different domains of the 23S rRNA in the assembled 50S subunit and ribosome. In terms of biological role, forms part of the polypeptide exit tunnel. The sequence is that of Large ribosomal subunit protein uL4 from Cereibacter sphaeroides (strain ATCC 17025 / ATH 2.4.3) (Rhodobacter sphaeroides).